The sequence spans 805 residues: Nitrite reductase [NAD(P)H] (805 aa).

Position 43–79 (43–79 (YNRILLSKVLQGDTDIKDITLNDWDWYEENNIQLYTN)) interacts with FAD. 193–223 (LQNELEKQGMTFLLEKQTEEIVGDDRVEGLR) contacts NADP(+). Residues cysteine 418, cysteine 420, cysteine 453, and cysteine 456 each contribute to the [2Fe-2S] cluster site. Residues cysteine 635, cysteine 641, cysteine 675, and cysteine 679 each coordinate [4Fe-4S] cluster. Cysteine 679 is a siroheme binding site.

The protein belongs to the nitrite and sulfite reductase 4Fe-4S domain family. Homodimer. Requires siroheme as cofactor. The cofactor is [2Fe-2S] cluster. It depends on [4Fe-4S] cluster as a cofactor. FAD is required as a cofactor.

It catalyses the reaction NH4(+) + 3 NADP(+) + 2 H2O = nitrite + 3 NADPH + 5 H(+). The enzyme catalyses NH4(+) + 3 NAD(+) + 2 H2O = nitrite + 3 NADH + 5 H(+). It functions in the pathway nitrogen metabolism; nitrate reduction (assimilation). In terms of biological role, required for nitrite assimilation. This chain is Nitrite reductase [NAD(P)H] (nasD), found in Bacillus subtilis (strain 168).